Consider the following 238-residue polypeptide: Orotidine 5'-phosphate decarboxylase (238 aa).

Residues D10, K32, D59–T68, T122, R184, Q193, G213, and R214 each bind substrate. The Proton donor role is filled by K61.

This sequence belongs to the OMP decarboxylase family. Type 1 subfamily. In terms of assembly, homodimer.

The catalysed reaction is orotidine 5'-phosphate + H(+) = UMP + CO2. It participates in pyrimidine metabolism; UMP biosynthesis via de novo pathway; UMP from orotate: step 2/2. Its function is as follows. Catalyzes the decarboxylation of orotidine 5'-monophosphate (OMP) to uridine 5'-monophosphate (UMP). This chain is Orotidine 5'-phosphate decarboxylase, found in Bacillus cereus (strain G9842).